The chain runs to 291 residues: ATP synthase gamma chain (291 aa).

This sequence belongs to the ATPase gamma chain family. F-type ATPases have 2 components, CF(1) - the catalytic core - and CF(0) - the membrane proton channel. CF(1) has five subunits: alpha(3), beta(3), gamma(1), delta(1), epsilon(1). CF(0) has three main subunits: a, b and c.

It localises to the cell inner membrane. Its function is as follows. Produces ATP from ADP in the presence of a proton gradient across the membrane. The gamma chain is believed to be important in regulating ATPase activity and the flow of protons through the CF(0) complex. This chain is ATP synthase gamma chain, found in Chlorobium limicola (strain DSM 245 / NBRC 103803 / 6330).